The primary structure comprises 294 residues: Farnesyl diphosphate synthase (294 aa).

Residues K45, R48, and H77 each contribute to the isopentenyl diphosphate site. 2 residues coordinate Mg(2+): D84 and D90. Residue R95 participates in (2E)-geranyl diphosphate binding. An isopentenyl diphosphate-binding site is contributed by R96. The (2E)-geranyl diphosphate site is built by K181, T182, and Q220.

The protein belongs to the FPP/GGPP synthase family. Mg(2+) serves as cofactor.

It is found in the cytoplasm. The enzyme catalyses isopentenyl diphosphate + (2E)-geranyl diphosphate = (2E,6E)-farnesyl diphosphate + diphosphate. The sequence is that of Farnesyl diphosphate synthase (ispA) from Buchnera aphidicola subsp. Schizaphis graminum (strain Sg).